The primary structure comprises 348 residues: Glycerol-1-phosphate dehydrogenase [NAD(P)+] (348 aa).

NAD(+) contacts are provided by residues 94 to 98 (GKVID) and 116 to 119 (TTAS). A substrate-binding site is contributed by aspartate 121. Serine 125 provides a ligand contact to NAD(+). Residue aspartate 168 participates in substrate binding. Positions 168 and 248 each coordinate Zn(2+). Histidine 252 is a binding site for substrate. Zn(2+) is bound at residue histidine 264.

The protein belongs to the glycerol-1-phosphate dehydrogenase family. Homooctamer. It depends on Zn(2+) as a cofactor.

The protein resides in the cytoplasm. It carries out the reaction sn-glycerol 1-phosphate + NAD(+) = dihydroxyacetone phosphate + NADH + H(+). The enzyme catalyses sn-glycerol 1-phosphate + NADP(+) = dihydroxyacetone phosphate + NADPH + H(+). It participates in membrane lipid metabolism; glycerophospholipid metabolism. Its function is as follows. Catalyzes the NAD(P)H-dependent reduction of dihydroxyacetonephosphate (DHAP or glycerone phosphate) to glycerol 1-phosphate (G1P). The G1P thus generated is used as the glycerophosphate backbone of phospholipids in the cellular membranes of Archaea. This Methanobrevibacter smithii (strain ATCC 35061 / DSM 861 / OCM 144 / PS) protein is Glycerol-1-phosphate dehydrogenase [NAD(P)+].